The chain runs to 41 residues: Large ribosomal subunit protein bL36 (41 aa).

It belongs to the bacterial ribosomal protein bL36 family.

This is Large ribosomal subunit protein bL36 from Bartonella henselae (strain ATCC 49882 / DSM 28221 / CCUG 30454 / Houston 1) (Rochalimaea henselae).